We begin with the raw amino-acid sequence, 432 residues long: Serine/threonine-protein kinase CDG1 (432 aa).

S-palmitoyl cysteine attachment occurs at residues cysteine 4 and cysteine 6. The segment covering 15 to 24 (LKDKSHKRSI) has biased composition (basic residues). The tract at residues 15–47 (LKDKSHKRSIRNQTSSSSAQPAGTAKEVDSSSS) is disordered. The span at 25 to 35 (RNQTSSSSAQP) shows a compositional bias: polar residues. Phosphoserine occurs at positions 44 and 47. The 281-residue stretch at 74 to 354 (FRNESLIGRG…SQVVECLKYI (281 aa)) folds into the Protein kinase domain. ATP-binding positions include 80-88 (IGRGGFGTV) and lysine 102. Tyrosine 147 is subject to Phosphotyrosine. Aspartate 200 functions as the Proton acceptor in the catalytic mechanism. Serine 204 and serine 234 each carry phosphoserine. Phosphothreonine is present on residues threonine 235 and threonine 240. Tyrosine 248 is subject to Phosphotyrosine.

The protein belongs to the protein kinase superfamily. Ser/Thr protein kinase family. In terms of assembly, interacts with BSU1, BSL1 and BRI1. Phosphorylated at Ser-44, Ser-47 and Ser-234 by BRI1. Expressed at high levels in the stamen and pollen grains. Expressed at a very low level in vegetative tissues.

The protein resides in the cell membrane. It carries out the reaction L-seryl-[protein] + ATP = O-phospho-L-seryl-[protein] + ADP + H(+). It catalyses the reaction L-threonyl-[protein] + ATP = O-phospho-L-threonyl-[protein] + ADP + H(+). Activated by phosphorylation at Ser-234. Functionally, serine/threonine-protein kinase involved in the positive regulation of brassinosteroid (BR) signaling and plant growth. Mediates BR signal transduction from BRI1 receptor kinase to BSU1 phosphatase. After activation by phosphorylation at Ser-234 by BRI1, CDG1 phosphorylates BSU1 at 'Ser-764' in the phosphatase domain, increasing the ability of BSU1 to inactivate the negative regulator of BR signaling ASK7/BIN2 by dephosphorylation at 'Tyr-200'. The full kinase activity of CDG1 is required for its biological function. This chain is Serine/threonine-protein kinase CDG1, found in Arabidopsis thaliana (Mouse-ear cress).